The chain runs to 534 residues: Ankyrin repeat domain-containing protein 34C (534 aa).

ANK repeat units lie at residues 10-39 (TDGNSLLKAVWLGRLRLTRLLLEGGAYINE), 43-80 (KGETALMVACITKHVDQQSISKSKMVKYLLDNRADPNI), 84-114 (SGKTALIHACIRRAGGEVVSLLLENGADPSL), and 118-147 (TGASALVYAINADDKDALKHLLDACKAKGK). The tract at residues 159-205 (SGTKTTKQYLNVPPSPKVEDRQSPPLCTTPSDVELKTSGLASPPSEK) is disordered. Residue S301 is modified to Phosphoserine. Disordered regions lie at residues 332-368 (YEKGQAPHPRLARRGTLPLDQEKSGMCPPGPSTLKDP) and 384-403 (QPVGDPPNSMSLESGKGPLD). Phosphoserine is present on S446. Residues 480 to 503 (SKPASPLASGLKSMAPVAPNSPKR) are disordered.

The protein belongs to the ANKRD34 family.

The protein is Ankyrin repeat domain-containing protein 34C (Ankrd34c) of Mus musculus (Mouse).